The chain runs to 304 residues: Glutaminase (304 aa).

The substrate site is built by S63, N114, E158, N165, Y189, Y240, and V258.

It belongs to the glutaminase family. As to quaternary structure, homotetramer.

The enzyme catalyses L-glutamine + H2O = L-glutamate + NH4(+). The polypeptide is Glutaminase (Shewanella baltica (strain OS195)).